The primary structure comprises 385 residues: 4-hydroxy-3-methylbut-2-en-1-yl diphosphate synthase (flavodoxin) 2 (385 aa).

Positions 280, 283, 315, and 322 each coordinate [4Fe-4S] cluster.

It belongs to the IspG family. It depends on [4Fe-4S] cluster as a cofactor.

It carries out the reaction (2E)-4-hydroxy-3-methylbut-2-enyl diphosphate + oxidized [flavodoxin] + H2O + 2 H(+) = 2-C-methyl-D-erythritol 2,4-cyclic diphosphate + reduced [flavodoxin]. It participates in isoprenoid biosynthesis; isopentenyl diphosphate biosynthesis via DXP pathway; isopentenyl diphosphate from 1-deoxy-D-xylulose 5-phosphate: step 5/6. Converts 2C-methyl-D-erythritol 2,4-cyclodiphosphate (ME-2,4cPP) into 1-hydroxy-2-methyl-2-(E)-butenyl 4-diphosphate. This chain is 4-hydroxy-3-methylbut-2-en-1-yl diphosphate synthase (flavodoxin) 2, found in Streptomyces coelicolor (strain ATCC BAA-471 / A3(2) / M145).